Reading from the N-terminus, the 255-residue chain is MVDPVAALCNYNVLEVIFSYLELDDLSHCSQVCKSWNLFLNDENSDVWRWHCLNKLPKEALKSDLLSSVSTYKTKLRAYFHAWSPNDCSRNVYIKPNGFTLHRNPVAQSTDAARGKIGFRHGRHAWEVIWEGPLGTVAVIGISTKEAVLQCHGYVALLGSDDQSWGWNLVENHLLHNGDMQGSYPLLNNAPKYQVGERIRIILDCDDNTLSFEKNYEFLGVAFRGLPDKKLYPTVSAVYGNTEVSMVYLGTPMDG.

The 49-residue stretch at 3 to 51 folds into the F-box domain; that stretch reads DPVAALCNYNVLEVIFSYLELDDLSHCSQVCKSWNLFLNDENSDVWRWH. The B30.2/SPRY domain maps to 61 to 253; sequence LKSDLLSSVS…VSMVYLGTPM (193 aa).

It belongs to the FBXO45/Fsn family. Component of an E3 ubiquitin ligase complex composed of hiw and Fsn.

It is found in the synapse. It participates in protein modification; protein ubiquitination. Its function is as follows. Required in the presynaptic motoneuron to down-regulate the levels of wnd and restrain synaptic terminal growth at the neuromuscular junction (NMJ). This chain is F-box/SPRY domain-containing protein 1, found in Drosophila ananassae (Fruit fly).